The primary structure comprises 122 residues: MAPLQLLHPWGRRGAWASQHSLLSQEAMGPGEGAEPTPWGYLRAEHWGASPSGAPTLPFAPDECSLTPGSPPHPLNKQKHHPPHPSQTQKDLVPRSPQLEKSRIRLRRTLRNLGGGRGQRGQ.

A disordered region spans residues 21-122 (SLLSQEAMGP…LGGGRGQRGQ (102 aa)). Residues 113-122 (LGGGRGQRGQ) are compositionally biased toward gly residues.

The polypeptide is Putative TLX1 neighbor protein (TLX1NB) (Homo sapiens (Human)).